A 251-amino-acid polypeptide reads, in one-letter code: CDP-diacylglycerol pyrophosphatase (251 aa).

The chain crosses the membrane as a helical span at residues 4 to 24; it reads AGLLFLVMIVIAVVAAGIGYW.

It belongs to the Cdh family.

The protein localises to the cell inner membrane. The enzyme catalyses a CDP-1,2-diacyl-sn-glycerol + H2O = a 1,2-diacyl-sn-glycero-3-phosphate + CMP + 2 H(+). The protein operates within phospholipid metabolism; CDP-diacylglycerol degradation; phosphatidate from CDP-diacylglycerol: step 1/1. This is CDP-diacylglycerol pyrophosphatase from Escherichia coli O7:K1 (strain IAI39 / ExPEC).